The following is a 229-amino-acid chain: C-type lectin domain family 1 member B (229 aa).

Topologically, residues 1 to 33 (MQDEDGYITLNIKTRKPALISVGSASSSWWRVM) are cytoplasmic. The residue at position 7 (Tyr7) is a Phosphotyrosine. The ITAM motif lies at 7-10 (YITL). The chain crosses the membrane as a helical; Signal-anchor for type II membrane protein span at residues 34–54 (ALILLILCVGMVVGLVALGIW). Residues 55 to 229 (SVMQRNYLQG…AGMTKVDQLP (175 aa)) are Extracellular-facing. The N-linked (GlcNAc...) asparagine glycan is linked to Asn68. A disulfide bridge links Cys102 with Cys113. The C-type lectin domain occupies 109-217 (YGDSCYGFFR…CENKHYLMCE (109 aa)). N-linked (GlcNAc...) asparagine glycans are attached at residues Asn120 and Asn134. 2 cysteine pairs are disulfide-bonded: Cys130/Cys216 and Cys195/Cys208.

As to quaternary structure, homodimer. Interacts (via cytoplasmic domain) with RACK1; promotes CLEC1B ubiquitination and proteasome-mediated degradation. Interacts (dimer) with SYK (via SH2 domains). Interacts with PDPN; the interaction is independent of CLEC1B glycosylation and activates CLEC1B. Glycosylated. Post-translationally, phosphorylated on tyrosine residue in response to rhodocytin binding. In terms of tissue distribution, expressed preferentially in the liver. Also expressed in immune cells of myeloid origin and on the surface of platelets.

It localises to the membrane. In terms of biological role, C-type lectin-like receptor that functions as a platelet receptor for the lymphatic endothelial marker, PDPN. After ligand activation, signals via sequential activation of SRC and SYK tyrosine kinases leading to activation of PLCG2. Functionally, (Microbial infection) Acts as a receptor for the platelet-aggregating snake venom protein rhodocytin. Rhodocytin binding leads to tyrosine phosphorylation and this promotes the binding of spleen tyrosine kinase (SYK) and initiation of downstream tyrosine phosphorylation events and activation of PLCG2. (Microbial infection) Acts as an attachment factor for Human immunodeficiency virus type 1 (HIV-1) and facilitates its capture by platelets. This chain is C-type lectin domain family 1 member B (CLEC1B), found in Homo sapiens (Human).